The chain runs to 144 residues: Nucleoside diphosphate kinase (144 aa).

Positions 11, 59, 87, 93, 104, and 114 each coordinate ATP. Histidine 117 acts as the Pros-phosphohistidine intermediate in catalysis.

This sequence belongs to the NDK family. As to quaternary structure, homotetramer. It depends on Mg(2+) as a cofactor.

The protein resides in the cytoplasm. It carries out the reaction a 2'-deoxyribonucleoside 5'-diphosphate + ATP = a 2'-deoxyribonucleoside 5'-triphosphate + ADP. The enzyme catalyses a ribonucleoside 5'-diphosphate + ATP = a ribonucleoside 5'-triphosphate + ADP. Major role in the synthesis of nucleoside triphosphates other than ATP. The ATP gamma phosphate is transferred to the NDP beta phosphate via a ping-pong mechanism, using a phosphorylated active-site intermediate. The polypeptide is Nucleoside diphosphate kinase (Aliivibrio fischeri (strain MJ11) (Vibrio fischeri)).